The chain runs to 740 residues: Ribosome-releasing factor 2, mitochondrial (740 aa).

Residues 1–29 (MLKYAWQSGPKQSNRWLWHLSNQIWKRSY) constitute a mitochondrion transit peptide. The region spanning 31 to 310 (SKIRNIGILA…AVNAYLPAPE (280 aa)) is the tr-type G domain. GTP is bound by residues 40 to 47 (AHIDAGKT), 104 to 108 (DTPGH), and 158 to 161 (NKMD).

Belongs to the TRAFAC class translation factor GTPase superfamily. Classic translation factor GTPase family. EF-G/EF-2 subfamily.

The protein localises to the mitochondrion. Mitochondrial GTPase that mediates the disassembly of ribosomes from messenger RNA at the termination of mitochondrial protein biosynthesis. Not involved in the GTP-dependent ribosomal translocation step during translation elongation. The sequence is that of Ribosome-releasing factor 2, mitochondrial from Drosophila melanogaster (Fruit fly).